The primary structure comprises 867 residues: DNA mismatch repair protein MutS (867 aa).

606–613 (GPNMSGKS) provides a ligand contact to ATP.

The protein belongs to the DNA mismatch repair MutS family.

Its function is as follows. This protein is involved in the repair of mismatches in DNA. It is possible that it carries out the mismatch recognition step. This protein has a weak ATPase activity. The polypeptide is DNA mismatch repair protein MutS (Oceanobacillus iheyensis (strain DSM 14371 / CIP 107618 / JCM 11309 / KCTC 3954 / HTE831)).